The following is a 150-amino-acid chain: MNDILREIGMIARALDSISNIEFKDLDLTRGQYLYLVRIYENPGIIQEKLAEMIKVDRTTAARAIKKLEMQGFIQKLPDEQNKKIKKLFPTEKGKKVYPLLRREGEHSTEVALSGFTSEEKETISALLHRVRKNIERDWEYVKKGNKRDY.

One can recognise an HTH marR-type domain in the interval 1–133; that stretch reads MNDILREIGM…ISALLHRVRK (133 aa). A DNA-binding region (H-T-H motif) is located at residues 47 to 70; sequence QEKLAEMIKVDRTTAARAIKKLEM.

This is an uncharacterized protein from Bacillus subtilis (strain 168).